Consider the following 344-residue polypeptide: Nuclear distribution protein nudE-like 1-B (344 aa).

The stretch at K13–G190 forms a coiled coil. Disordered regions lie at residues R186–S209 and P325–V344. A compositionally biased stretch (pro residues) spans P333 to V344.

The protein belongs to the nudE family. Post-translationally, phosphorylated in mitosis.

The protein localises to the cytoplasm. The protein resides in the cytoskeleton. Its subcellular location is the microtubule organizing center. It localises to the centrosome. It is found in the spindle. Functionally, required for organization of the cellular microtubule array and microtubule anchoring at the centrosome. Positively regulates the activity of the minus-end directed microtubule motor protein dynein. May enhance dynein-mediated microtubule sliding by targeting dynein to the microtubule plus end. Positively regulates lysosome peripheral distribution and ruffled border formation in osteoclasts. This is Nuclear distribution protein nudE-like 1-B (ndel1-b) from Xenopus laevis (African clawed frog).